Reading from the N-terminus, the 302-residue chain is Acetaldehyde dehydrogenase (302 aa).

Residue 12–15 (SGNI) participates in NAD(+) binding. C127 functions as the Acyl-thioester intermediate in the catalytic mechanism. Residues 158–166 (SAGPGTRQN) and N276 each bind NAD(+).

This sequence belongs to the acetaldehyde dehydrogenase family.

It catalyses the reaction acetaldehyde + NAD(+) + CoA = acetyl-CoA + NADH + H(+). This Geobacillus genomosp. 3 protein is Acetaldehyde dehydrogenase (nahO).